We begin with the raw amino-acid sequence, 55 residues long: uncharacterized protein (55 aa).

Residues 27–47 traverse the membrane as a helical segment; it reads IFLIYHFSPIYCPYLFLFTVF.

It is found in the membrane. This is an uncharacterized protein from Acheta domesticus (House cricket).